A 440-amino-acid chain; its full sequence is Adenosylhomocysteinase (440 aa).

Substrate is bound by residues Thr-47, Asp-123, and Glu-148. Residue 149-151 (TTT) coordinates NAD(+). Residues Lys-178 and Asp-182 each coordinate substrate. Residues Asn-183, 228-233 (GFGDVG), Glu-251, 307-309 (IGH), and Asn-354 each bind NAD(+).

Belongs to the adenosylhomocysteinase family. NAD(+) serves as cofactor.

It carries out the reaction S-adenosyl-L-homocysteine + H2O = L-homocysteine + adenosine. Its pathway is amino-acid biosynthesis; L-homocysteine biosynthesis; L-homocysteine from S-adenosyl-L-homocysteine: step 1/1. Functionally, adenosylhomocysteine is a competitive inhibitor of S-adenosyl-L-methionine-dependent methyl transferase reactions; therefore adenosylhomocysteinase may play a key role in the control of methylations via regulation of the intracellular concentration of adenosylhomocysteine. The chain is Adenosylhomocysteinase (SAHH) from Pneumocystis carinii.